We begin with the raw amino-acid sequence, 432 residues long: Ribulose bisphosphate carboxylase-like protein 2 (432 aa).

Mg(2+) is bound by residues Lys198, Asp200, and Glu201. Lys198 is subject to N6-carboxylysine.

It belongs to the RuBisCO large chain family. Type IV subfamily. In terms of assembly, homodimer. It depends on Mg(2+) as a cofactor.

In terms of biological role, may be involved in sulfur metabolism and oxidative stress response. Does not show RuBisCO activity. The polypeptide is Ribulose bisphosphate carboxylase-like protein 2 (rlp2) (Rhodopseudomonas palustris (strain ATCC BAA-98 / CGA009)).